The following is a 503-amino-acid chain: ATP synthase subunit beta (503 aa).

An ATP-binding site is contributed by 157–164 (GGAGVGKT).

Belongs to the ATPase alpha/beta chains family. In terms of assembly, F-type ATPases have 2 components, CF(1) - the catalytic core - and CF(0) - the membrane proton channel. CF(1) has five subunits: alpha(3), beta(3), gamma(1), delta(1), epsilon(1). CF(0) has three main subunits: a(1), b(2) and c(9-12). The alpha and beta chains form an alternating ring which encloses part of the gamma chain. CF(1) is attached to CF(0) by a central stalk formed by the gamma and epsilon chains, while a peripheral stalk is formed by the delta and b chains.

It localises to the cell inner membrane. The catalysed reaction is ATP + H2O + 4 H(+)(in) = ADP + phosphate + 5 H(+)(out). Produces ATP from ADP in the presence of a proton gradient across the membrane. The catalytic sites are hosted primarily by the beta subunits. This is ATP synthase subunit beta from Flavobacterium johnsoniae (strain ATCC 17061 / DSM 2064 / JCM 8514 / BCRC 14874 / CCUG 350202 / NBRC 14942 / NCIMB 11054 / UW101) (Cytophaga johnsonae).